The chain runs to 203 residues: Bone marrow stromal antigen 2 (203 aa).

At 1-26 (MAPTFYHYHPLPMDQKEPGCGIRWRC) the chain is on the cytoplasmic side. The chain crosses the membrane as a helical; Signal-anchor for type II membrane protein span at residues 27–47 (LAAASVLILVALVIPLIIFAV). At 48-183 (KANSEACRDG…EASITSKQNS (136 aa)) the chain is on the extracellular side. Residues Asn66 and Asn93 are each glycosylated (N-linked (GlcNAc...) asparagine). The stretch at 66–178 (NTTRLLQRQL…LRTAEEASIT (113 aa)) forms a coiled coil. Ser183 carries the GPI-anchor amidated serine lipid modification. A propeptide spans 184 to 203 (AGSMAVSSLLVLAVPLFLLF) (removed in mature form).

Parallel homodimer; disulfide-linked. May form homotetramers under reducing conditions. Isoform 1 and isoform 2 form homodimers and also heterodimers with each other. Dimerization is essential for its antiviral activity. Interacts (via cytoplasmic domain) with ARHGAP44. Interacts with MMP14 (via C-terminal cytoplasmic tail). Interacts with LILRA4/ILT7. Interacts with RNF115. Post-translationally, the GPI anchor is essential for its antiviral activity.

The protein localises to the golgi apparatus. The protein resides in the trans-Golgi network. It localises to the cell membrane. It is found in the late endosome. Its subcellular location is the membrane raft. The protein localises to the cytoplasm. The protein resides in the apical cell membrane. Its function is as follows. IFN-induced antiviral host restriction factor which efficiently blocks the release of diverse mammalian enveloped viruses by directly tethering nascent virions to the membranes of infected cells. Acts as a direct physical tether, holding virions to the cell membrane and linking virions to each other. The tethered virions can be internalized by endocytosis and subsequently degraded or they can remain on the cell surface. In either case, their spread as cell-free virions is restricted. Its target viruses belong to diverse families, including retroviridae: human immunodeficiency virus type 1 (HIV-1), mouse mammary tumor virus (MMTV) and murine leukemia virus (MLV), filoviridae: ebola virus (EBOV), arenaviridae: lassa virus (LASV), and rhabdoviridae: vesicular stomatitis virus (VSV). Can inhibit cell surface proteolytic activity of MMP14 causing decreased activation of MMP15 which results in inhibition of cell growth and migration. Can stimulate signaling by LILRA4/ILT7 and consequently provide negative feedback to the production of IFN by plasmacytoid dendritic cells in response to viral infection. Plays a role in the organization of the subapical actin cytoskeleton in polarized epithelial cells. This is Bone marrow stromal antigen 2 (Bst2) from Cricetulus griseus (Chinese hamster).